A 370-amino-acid chain; its full sequence is Putative agmatine deiminase (370 aa).

C361 functions as the Amidino-cysteine intermediate in the catalytic mechanism.

Belongs to the agmatine deiminase family.

It catalyses the reaction agmatine + H2O = N-carbamoylputrescine + NH4(+). The sequence is that of Putative agmatine deiminase from Shewanella sp. (strain MR-4).